The following is a 31-amino-acid chain: GFNPCGETCWNKPTCHAPGCTCSIANICVRN.

The cyclopeptide (Gly-Asn) cross-link spans 1 to 31 (GFNPCGETCWNKPTCHAPGCTCSIANICVRN). Disulfide bonds link cysteine 5/cysteine 20, cysteine 9/cysteine 22, and cysteine 15/cysteine 28.

This is a cyclic peptide.

Functionally, probably participates in a plant defense mechanism. The chain is Cyclotide psybry B from Psychotria brachyceras.